The primary structure comprises 193 residues: Dual-action ribosomal maturation protein DarP (193 aa).

Over residues 1 to 10 (MRGRDEDTGE) the composition is skewed to basic and acidic residues. Disordered stretches follow at residues 1-20 (MRGR…SQQR) and 171-193 (QEQG…EDDE). Over residues 181–193 (GLEDGESALEDDE) the composition is skewed to acidic residues.

The protein belongs to the DarP family.

Its subcellular location is the cytoplasm. Its function is as follows. Member of a network of 50S ribosomal subunit biogenesis factors which assembles along the 30S-50S interface, preventing incorrect 23S rRNA structures from forming. Promotes peptidyl transferase center (PTC) maturation. In Xanthomonas oryzae pv. oryzae (strain KACC10331 / KXO85), this protein is Dual-action ribosomal maturation protein DarP.